Consider the following 103-residue polypeptide: Pyrimidine/purine nucleoside phosphorylase (103 aa).

It belongs to the nucleoside phosphorylase PpnP family.

The enzyme catalyses a purine D-ribonucleoside + phosphate = a purine nucleobase + alpha-D-ribose 1-phosphate. The catalysed reaction is adenosine + phosphate = alpha-D-ribose 1-phosphate + adenine. It catalyses the reaction cytidine + phosphate = cytosine + alpha-D-ribose 1-phosphate. It carries out the reaction guanosine + phosphate = alpha-D-ribose 1-phosphate + guanine. The enzyme catalyses inosine + phosphate = alpha-D-ribose 1-phosphate + hypoxanthine. The catalysed reaction is thymidine + phosphate = 2-deoxy-alpha-D-ribose 1-phosphate + thymine. It catalyses the reaction uridine + phosphate = alpha-D-ribose 1-phosphate + uracil. It carries out the reaction xanthosine + phosphate = alpha-D-ribose 1-phosphate + xanthine. In terms of biological role, catalyzes the phosphorolysis of diverse nucleosides, yielding D-ribose 1-phosphate and the respective free bases. Can use uridine, adenosine, guanosine, cytidine, thymidine, inosine and xanthosine as substrates. Also catalyzes the reverse reactions. This Chlorobium chlorochromatii (strain CaD3) protein is Pyrimidine/purine nucleoside phosphorylase.